Here is a 429-residue protein sequence, read N- to C-terminus: Enolase (429 aa).

Position 163 (glutamine 163) interacts with (2R)-2-phosphoglycerate. The Proton donor role is filled by glutamate 205. Residues aspartate 242, glutamate 287, and aspartate 314 each contribute to the Mg(2+) site. Residues lysine 339, arginine 368, serine 369, and lysine 390 each contribute to the (2R)-2-phosphoglycerate site. Lysine 339 acts as the Proton acceptor in catalysis.

This sequence belongs to the enolase family. Mg(2+) serves as cofactor.

The protein localises to the cytoplasm. The protein resides in the secreted. Its subcellular location is the cell surface. The catalysed reaction is (2R)-2-phosphoglycerate = phosphoenolpyruvate + H2O. Its pathway is carbohydrate degradation; glycolysis; pyruvate from D-glyceraldehyde 3-phosphate: step 4/5. Its function is as follows. Catalyzes the reversible conversion of 2-phosphoglycerate (2-PG) into phosphoenolpyruvate (PEP). It is essential for the degradation of carbohydrates via glycolysis. This is Enolase from Cupriavidus pinatubonensis (strain JMP 134 / LMG 1197) (Cupriavidus necator (strain JMP 134)).